The chain runs to 294 residues: 33 kDa chaperonin (294 aa).

Disulfide bonds link Cys-239/Cys-241 and Cys-272/Cys-275.

Belongs to the HSP33 family. Post-translationally, under oxidizing conditions two disulfide bonds are formed involving the reactive cysteines. Under reducing conditions zinc is bound to the reactive cysteines and the protein is inactive.

Its subcellular location is the cytoplasm. In terms of biological role, redox regulated molecular chaperone. Protects both thermally unfolding and oxidatively damaged proteins from irreversible aggregation. Plays an important role in the bacterial defense system toward oxidative stress. This chain is 33 kDa chaperonin, found in Lacticaseibacillus casei (strain BL23) (Lactobacillus casei).